The chain runs to 355 residues: Alanine racemase (355 aa).

The Proton acceptor; specific for D-alanine role is filled by lysine 34. Lysine 34 bears the N6-(pyridoxal phosphate)lysine mark. Arginine 133 provides a ligand contact to substrate. Tyrosine 249 acts as the Proton acceptor; specific for L-alanine in catalysis. Methionine 297 lines the substrate pocket.

This sequence belongs to the alanine racemase family. The cofactor is pyridoxal 5'-phosphate.

It carries out the reaction L-alanine = D-alanine. Its pathway is amino-acid biosynthesis; D-alanine biosynthesis; D-alanine from L-alanine: step 1/1. Functionally, catalyzes the interconversion of L-alanine and D-alanine. May also act on other amino acids. The protein is Alanine racemase (alr) of Rickettsia peacockii (strain Rustic).